Consider the following 503-residue polypeptide: Anaerobic nitric oxide reductase flavorubredoxin (503 aa).

The interval 30-210 (LQGSSYNSYL…PFSRLVTAKI (181 aa)) is zinc metallo-hydrolase. Residues His79, Glu81, Asp83, His147, Asp166, and His227 each coordinate Fe cation. A Flavodoxin-like domain is found at 254–393 (ITLFYDTMSN…ICREHGREIA (140 aa)). Residues 260–264 (TMSNN) and 342–369 (AFGS…ETTL) each bind FMN. The region spanning 451–502 (NGCMQCSVCQWIYDPALGEPMQDVTPGTMWSDVPDSFLCPECGLGKDVFNPI) is the Rubredoxin-like domain. 4 residues coordinate Fe cation: Cys456, Cys459, Cys489, and Cys492.

This sequence in the N-terminal section; belongs to the zinc metallo-hydrolase group 3 family. As to quaternary structure, homotetramer. The cofactor is Fe cation. FMN serves as cofactor.

It is found in the cytoplasm. It participates in nitrogen metabolism; nitric oxide reduction. Anaerobic nitric oxide reductase; uses NADH to detoxify nitric oxide (NO), protecting several 4Fe-4S NO-sensitive enzymes. Has at least 2 reductase partners, only one of which (NorW, flavorubredoxin reductase) has been identified. NO probably binds to the di-iron center; electrons enter from the NorW at rubredoxin and are transferred sequentially to the FMN center and the di-iron center. Also able to function as an aerobic oxygen reductase. This chain is Anaerobic nitric oxide reductase flavorubredoxin, found in Pectobacterium carotovorum subsp. carotovorum (strain PC1).